The chain runs to 420 residues: Uteroferrin-associated basic protein 2 (420 aa).

The N-terminal stretch at 1-25 is a signal peptide; the sequence is MSHGKMPLVLSLVLILCGLFNSISC. 3 N-linked (GlcNAc...) asparagine glycosylation sites follow: asparagine 225, asparagine 271, and asparagine 343.

Belongs to the serpin family. UTMP subfamily.

Its subcellular location is the secreted. The protein resides in the extracellular space. The protein is Uteroferrin-associated basic protein 2 of Sus scrofa (Pig).